Reading from the N-terminus, the 142-residue chain is ATP synthase epsilon chain (142 aa).

Belongs to the ATPase epsilon chain family. F-type ATPases have 2 components, CF(1) - the catalytic core - and CF(0) - the membrane proton channel. CF(1) has five subunits: alpha(3), beta(3), gamma(1), delta(1), epsilon(1). CF(0) has three main subunits: a, b and c.

Its subcellular location is the cell membrane. Produces ATP from ADP in the presence of a proton gradient across the membrane. This chain is ATP synthase epsilon chain, found in Lactiplantibacillus plantarum (strain ATCC BAA-793 / NCIMB 8826 / WCFS1) (Lactobacillus plantarum).